A 628-amino-acid polypeptide reads, in one-letter code: Probable potassium transport system protein Kup (628 aa).

The next 12 helical transmembrane spans lie at 12–32, 57–77, 106–126, 141–161, 174–194, 219–239, 253–273, 295–315, 343–363, 369–389, 402–422, and 425–445; these read ALPL…IGTS, LLSL…VMLV, WYLL…GVLT, ISPA…AAVF, FYGP…VYGI, LAGV…ALYA, WLFV…AILL, LLFL…TGVF, IYVG…VLGF, LASA…ILFV, AVIA…SANL, and LHEG…VMVS.

This sequence belongs to the HAK/KUP transporter (TC 2.A.72) family.

The protein localises to the cell inner membrane. It catalyses the reaction K(+)(in) + H(+)(in) = K(+)(out) + H(+)(out). In terms of biological role, transport of potassium into the cell. Likely operates as a K(+):H(+) symporter. The chain is Probable potassium transport system protein Kup from Azorhizobium caulinodans (strain ATCC 43989 / DSM 5975 / JCM 20966 / LMG 6465 / NBRC 14845 / NCIMB 13405 / ORS 571).